The following is a 405-amino-acid chain: Amino sugar nitrososynthase DnmZ (405 aa).

2 residues coordinate dTDP: Glu117 and Arg332.

It belongs to the acyl-CoA dehydrogenase family. In terms of assembly, homotetramer. FAD serves as cofactor.

The protein operates within antibiotic biosynthesis. Nitrososynthase involved in the biosynthesis of baumycin. Catalyzes the double-oxidation of TDP-L-epi-vancosamine to TDP-L-epi-vancosonitrose. The rapid turnover of TDP-L-epi-vancosamine suggests that this compound, or a closely related analog, is the natural substrate for DnmZ. Can also catalyze the double-oxidation of TDP-L-evernosamine to TDP-L-evernitrosose. In Streptomyces peucetius, this protein is Amino sugar nitrososynthase DnmZ.